Here is a 401-residue protein sequence, read N- to C-terminus: Tryptophan synthase beta chain (401 aa).

Residue K92 is modified to N6-(pyridoxal phosphate)lysine.

This sequence belongs to the TrpB family. In terms of assembly, tetramer of two alpha and two beta chains. Requires pyridoxal 5'-phosphate as cofactor.

It catalyses the reaction (1S,2R)-1-C-(indol-3-yl)glycerol 3-phosphate + L-serine = D-glyceraldehyde 3-phosphate + L-tryptophan + H2O. It participates in amino-acid biosynthesis; L-tryptophan biosynthesis; L-tryptophan from chorismate: step 5/5. Functionally, the beta subunit is responsible for the synthesis of L-tryptophan from indole and L-serine. The protein is Tryptophan synthase beta chain of Vesicomyosocius okutanii subsp. Calyptogena okutanii (strain HA).